The primary structure comprises 508 residues: Aldehyde dehydrogenase family 7 member A1 (508 aa).

244–249 (GSSKVG) serves as a coordination point for NAD(+). Catalysis depends on Glu266, which acts as the Proton acceptor. Catalysis depends on Cys300, which acts as the Nucleophile.

This sequence belongs to the aldehyde dehydrogenase family. In terms of assembly, homotetramer.

It carries out the reaction an aldehyde + NAD(+) + H2O = a carboxylate + NADH + 2 H(+). The chain is Aldehyde dehydrogenase family 7 member A1 from Pisum sativum (Garden pea).